Consider the following 437-residue polypeptide: Protein translocase subunit SecY (437 aa).

The next 10 membrane-spanning stretches (helical) occupy residues 19–39 (LFTL…IPGV), 69–89 (LLQI…SIIL), 122–142 (VALA…GALF), 157–177 (IFTT…VMWL), 189–209 (GMSI…LWSI), 219–239 (WIEF…VVFV), 275–295 (GIIP…VVQF), 318–338 (HITV…AISF), 378–398 (GSLY…PLGA), and 400–420 (QNFP…LETV).

This sequence belongs to the SecY/SEC61-alpha family. As to quaternary structure, component of the Sec protein translocase complex. Heterotrimer consisting of SecY, SecE and SecG subunits. The heterotrimers can form oligomers, although 1 heterotrimer is thought to be able to translocate proteins. Interacts with the ribosome. Interacts with SecDF, and other proteins may be involved. Interacts with SecA.

It is found in the cell membrane. The central subunit of the protein translocation channel SecYEG. Consists of two halves formed by TMs 1-5 and 6-10. These two domains form a lateral gate at the front which open onto the bilayer between TMs 2 and 7, and are clamped together by SecE at the back. The channel is closed by both a pore ring composed of hydrophobic SecY resides and a short helix (helix 2A) on the extracellular side of the membrane which forms a plug. The plug probably moves laterally to allow the channel to open. The ring and the pore may move independently. This Streptomyces scabiei protein is Protein translocase subunit SecY.